A 106-amino-acid chain; its full sequence is UPF0145 protein Daci_3728 (106 aa).

The protein belongs to the UPF0145 family.

The protein is UPF0145 protein Daci_3728 of Delftia acidovorans (strain DSM 14801 / SPH-1).